A 677-amino-acid chain; its full sequence is AP-2 complex subunit beta (677 aa).

The interval 597–677 (RLRTRDSNPS…PMTPETHLMD (81 aa)) is disordered. Residues 616–627 (KKYNHFHQKSQT) show a composition bias toward basic residues. A compositionally biased stretch (polar residues) spans 636 to 654 (RNSWNPSPFSDESNSNTFS).

Belongs to the adaptor complexes large subunit family. Adaptor protein complex 2 (AP-2) is a heterotetramer composed of two large adaptins (alpha-type subunit apl3 and beta-type subunit apl1), a medium chain (mu-type subunit apm4) and a small adaptin (sigma-type subunit aps2).

It is found in the cell membrane. The protein localises to the membrane. The protein resides in the coated pit. Its function is as follows. Adaptins are components of the adaptor complexes which link clathrin to receptors in coated vesicles. Clathrin-associated protein complexes are believed to interact with the cytoplasmic tails of membrane proteins, leading to their selection and concentration. Beta adaptin is a subunit of the plasma membrane adaptor. In Schizosaccharomyces pombe (strain 972 / ATCC 24843) (Fission yeast), this protein is AP-2 complex subunit beta (apl1).